A 148-amino-acid chain; its full sequence is Lysozyme C (148 aa).

The first 18 residues, methionine 1–glycine 18, serve as a signal peptide directing secretion. The 130-residue stretch at lysine 19–valine 148 folds into the C-type lysozyme domain. Disulfide bonds link cysteine 24–cysteine 146, cysteine 48–cysteine 134, cysteine 83–cysteine 99, and cysteine 95–cysteine 113. Catalysis depends on residues glutamate 53 and aspartate 71.

Belongs to the glycosyl hydrolase 22 family. Monomer.

It carries out the reaction Hydrolysis of (1-&gt;4)-beta-linkages between N-acetylmuramic acid and N-acetyl-D-glucosamine residues in a peptidoglycan and between N-acetyl-D-glucosamine residues in chitodextrins.. Functionally, lysozymes have primarily a bacteriolytic function; those in tissues and body fluids are associated with the monocyte-macrophage system and enhance the activity of immunoagents. The sequence is that of Lysozyme C (LYZ) from Gorilla gorilla gorilla (Western lowland gorilla).